The following is a 2876-amino-acid chain: Nipped-B-like protein B (2876 aa).

Polar residues-rich tracts occupy residues 124–142 and 149–167; these read PQNSMHGSPASNYQQTTIT and YVQTQAGSGSRYMPQQNSP. Disordered stretches follow at residues 124-197, 246-367, 439-494, and 525-1017; these read PQNS…PIQQ, NDEG…SDAE, RESA…AGNK, and EGPV…FPNY. Residues 276-290 show a composition bias toward pro residues; it reads GPRPPLILQSPPPYT. Basic and acidic residues predominate over residues 439-457; that stretch reads RESAIERERCSKEVQDKDK. A compositionally biased stretch (low complexity) spans 471–480; sequence PGAAGTAGAS. A compositionally biased stretch (gly residues) spans 481 to 490; it reads GTPGVGGGCN. Composition is skewed to basic and acidic residues over residues 556-577, 586-955, and 962-1005; these read SKTDGEVQRTVDGRPEVIKQRV, VDGR…EQRS, and VKQE…HKPQ. Residues 1068–1081 carry the PxVxL motif motif; that stretch reads NKGAKPVVVLKKLS. Disordered regions lie at residues 1088–1229 and 1724–1747; these read MISN…EPKL and TEKAMKSQRDDDSSDGPHHAKDVE. Low complexity predominate over residues 1090–1100; sequence SNSRSSKSSRS. 2 stretches are compositionally biased toward basic and acidic residues: residues 1104–1119 and 1156–1183; these read RFRETDSRLPLCERVK and KDRDKTWEYEEKDRRGSGDHRRSFDSRR. Residues 1212-1223 are compositionally biased toward basic residues; the sequence is KLKKKEKQKKRK. 5 HEAT repeats span residues 1803 to 1841, 1879 to 1917, 1981 to 2020, 2203 to 2241, and 2349 to 2387; these read AQSFDIYLTQILRVLGESAIAVRTKAMKCLSEVVAVDPS, PQLTEQYYDMLIERILDTGISVRKRVIKILRDICLEQPT, YDWFEQLLQNLLKSEEDASYKPARKACAQLVDSLVEHILK, VVIKDKVLELLLYFTKNDDEEVQTKAIIGLGFLFIQDPG, and LIHPVQCVPYLIAMGTDSEPTMRNKADQQLVEIDKKYTG. Disordered stretches follow at residues 2516–2590 and 2728–2774; these read EVVK…DSDL and ALLG…GHRN. Residues 2519 to 2537 show a composition bias toward basic residues; the sequence is KKKKKKKKKKKQKQKRGKK. The segment covering 2548–2563 has biased composition (low complexity); sequence RSSSSSSSSSSSSSDS. A compositionally biased stretch (basic and acidic residues) spans 2762 to 2774; sequence RTGDSAEASGHRN.

The protein belongs to the SCC2/Nipped-B family.

It is found in the nucleus. Its function is as follows. May play a structural role in chromatin. Involved in sister chromatid cohesion, possibly by facilitating the cohesin complex loading. Transcription factor, which may promote cortical neuron migration during brain development by regulating the transcription of crucial genes in this process. This is Nipped-B-like protein B (nipblb) from Danio rerio (Zebrafish).